Consider the following 337-residue polypeptide: Glyceraldehyde-3-phosphate dehydrogenase (337 aa).

NAD(+) contacts are provided by residues 17 to 18 (RI), Asp39, Lys83, and Ser125. D-glyceraldehyde 3-phosphate-binding positions include 156 to 158 (SCT), Thr187, Arg202, 215 to 216 (TG), and Arg238. The active-site Nucleophile is the Cys157. Asn319 contributes to the NAD(+) binding site.

It belongs to the glyceraldehyde-3-phosphate dehydrogenase family. As to quaternary structure, homotetramer.

It is found in the cytoplasm. It carries out the reaction D-glyceraldehyde 3-phosphate + phosphate + NAD(+) = (2R)-3-phospho-glyceroyl phosphate + NADH + H(+). It participates in carbohydrate degradation; glycolysis; pyruvate from D-glyceraldehyde 3-phosphate: step 1/5. Catalyzes the oxidative phosphorylation of glyceraldehyde 3-phosphate (G3P) to 1,3-bisphosphoglycerate (BPG) using the cofactor NAD. The first reaction step involves the formation of a hemiacetal intermediate between G3P and a cysteine residue, and this hemiacetal intermediate is then oxidized to a thioester, with concomitant reduction of NAD to NADH. The reduced NADH is then exchanged with the second NAD, and the thioester is attacked by a nucleophilic inorganic phosphate to produce BPG. The sequence is that of Glyceraldehyde-3-phosphate dehydrogenase (gapA) from Mycoplasma pneumoniae (strain ATCC 29342 / M129 / Subtype 1) (Mycoplasmoides pneumoniae).